Consider the following 371-residue polypeptide: Aminomethyltransferase (371 aa).

Belongs to the GcvT family. The glycine cleavage system is composed of four proteins: P, T, L and H.

The catalysed reaction is N(6)-[(R)-S(8)-aminomethyldihydrolipoyl]-L-lysyl-[protein] + (6S)-5,6,7,8-tetrahydrofolate = N(6)-[(R)-dihydrolipoyl]-L-lysyl-[protein] + (6R)-5,10-methylene-5,6,7,8-tetrahydrofolate + NH4(+). Functionally, the glycine cleavage system catalyzes the degradation of glycine. In Leptospira borgpetersenii serovar Hardjo-bovis (strain JB197), this protein is Aminomethyltransferase.